The chain runs to 554 residues: Phenylalanine--tRNA ligase beta subunit (554 aa).

Residues 276-351 (LTPKSRMISV…INYGYEKFEG (76 aa)) form the B5 domain. The Mg(2+) site is built by D329, D335, E338, and E339.

Belongs to the phenylalanyl-tRNA synthetase beta subunit family. Type 2 subfamily. In terms of assembly, tetramer of two alpha and two beta subunits. Mg(2+) serves as cofactor.

It localises to the cytoplasm. It carries out the reaction tRNA(Phe) + L-phenylalanine + ATP = L-phenylalanyl-tRNA(Phe) + AMP + diphosphate + H(+). The chain is Phenylalanine--tRNA ligase beta subunit from Methanococcus maripaludis (strain C6 / ATCC BAA-1332).